Here is a 338-residue protein sequence, read N- to C-terminus: Aspartate carbamoyltransferase catalytic subunit (338 aa).

Carbamoyl phosphate contacts are provided by arginine 59 and threonine 60. An L-aspartate-binding site is contributed by lysine 87. Arginine 109, histidine 142, and glutamine 145 together coordinate carbamoyl phosphate. Positions 182 and 248 each coordinate L-aspartate. Residues glycine 289 and proline 290 each contribute to the carbamoyl phosphate site.

Belongs to the aspartate/ornithine carbamoyltransferase superfamily. ATCase family. Heterododecamer (2C3:3R2) of six catalytic PyrB chains organized as two trimers (C3), and six regulatory PyrI chains organized as three dimers (R2).

It catalyses the reaction carbamoyl phosphate + L-aspartate = N-carbamoyl-L-aspartate + phosphate + H(+). The protein operates within pyrimidine metabolism; UMP biosynthesis via de novo pathway; (S)-dihydroorotate from bicarbonate: step 2/3. Functionally, catalyzes the condensation of carbamoyl phosphate and aspartate to form carbamoyl aspartate and inorganic phosphate, the committed step in the de novo pyrimidine nucleotide biosynthesis pathway. The sequence is that of Aspartate carbamoyltransferase catalytic subunit from Synechococcus elongatus (strain ATCC 33912 / PCC 7942 / FACHB-805) (Anacystis nidulans R2).